The sequence spans 427 residues: Glutamate-1-semialdehyde 2,1-aminomutase 2 (427 aa).

At lysine 267 the chain carries N6-(pyridoxal phosphate)lysine.

This sequence belongs to the class-III pyridoxal-phosphate-dependent aminotransferase family. HemL subfamily. In terms of assembly, homodimer. Pyridoxal 5'-phosphate serves as cofactor.

Its subcellular location is the cytoplasm. It catalyses the reaction (S)-4-amino-5-oxopentanoate = 5-aminolevulinate. Its pathway is porphyrin-containing compound metabolism; protoporphyrin-IX biosynthesis; 5-aminolevulinate from L-glutamyl-tRNA(Glu): step 2/2. The polypeptide is Glutamate-1-semialdehyde 2,1-aminomutase 2 (Staphylococcus saprophyticus subsp. saprophyticus (strain ATCC 15305 / DSM 20229 / NCIMB 8711 / NCTC 7292 / S-41)).